Reading from the N-terminus, the 176-residue chain is Putative L,D-transpeptidase YqjB (176 aa).

Residues 1-25 (MRFFLCSIFMMISPIWPLGENPLPG) form the signal peptide. Positions 27-151 (PYVIVNKRTN…IPVGTRVLIT (125 aa)) constitute a L,D-TPase catalytic domain. Catalysis depends on H111, which acts as the Proton donor/acceptor. Catalysis depends on C127, which acts as the Nucleophile.

The protein belongs to the YkuD family.

Its pathway is cell wall biogenesis; peptidoglycan biosynthesis. This chain is Putative L,D-transpeptidase YqjB (yqjB), found in Bacillus subtilis (strain 168).